The following is a 211-amino-acid chain: Transcriptional regulator NarO (211 aa).

The 52-residue stretch at 154–205 folds into the HTH bat-type domain; the sequence is LTARQREVLETAHEMGYFEHPREANATEVAAALDINRSTFTEHLSAAQSKLL.

Functionally, activates transcription of the denitrifying genes (nitrate reductase narA and nitrite reductase nirK) under anaerobic conditions. The polypeptide is Transcriptional regulator NarO (Haloferax volcanii (strain ATCC 29605 / DSM 3757 / JCM 8879 / NBRC 14742 / NCIMB 2012 / VKM B-1768 / DS2) (Halobacterium volcanii)).